Consider the following 145-residue polypeptide: NADH-quinone oxidoreductase subunit A (145 aa).

The next 3 membrane-spanning stretches (helical) occupy residues 14–34 (FAVFLIVSIGLCCLMLAGAWF), 66–86 (FYLVAMFFVIFDVEALYLYAW), and 96–116 (VGFVEAAIFILVLLAGLFYLV).

Belongs to the complex I subunit 3 family. As to quaternary structure, NDH-1 is composed of 13 different subunits. Subunits NuoA, H, J, K, L, M, N constitute the membrane sector of the complex.

Its subcellular location is the cell inner membrane. The catalysed reaction is a quinone + NADH + 5 H(+)(in) = a quinol + NAD(+) + 4 H(+)(out). Its function is as follows. NDH-1 shuttles electrons from NADH, via FMN and iron-sulfur (Fe-S) centers, to quinones in the respiratory chain. The immediate electron acceptor for the enzyme in this species is believed to be ubiquinone. Couples the redox reaction to proton translocation (for every two electrons transferred, four hydrogen ions are translocated across the cytoplasmic membrane), and thus conserves the redox energy in a proton gradient. This Erwinia tasmaniensis (strain DSM 17950 / CFBP 7177 / CIP 109463 / NCPPB 4357 / Et1/99) protein is NADH-quinone oxidoreductase subunit A.